Here is a 597-residue protein sequence, read N- to C-terminus: TOX high mobility group box family member 4 (597 aa).

Disordered regions lie at residues 160 to 224 (GAIL…EPQK) and 520 to 546 (VQEE…SPQP). The segment covering 207–217 (KPKTPKKKKKK) has biased composition (basic residues). Positions 212-217 (KKKKKK) match the Nuclear localization signal motif. The HMG box DNA-binding region spans 222–290 (PQKPLSAYAL…EYLKALALYK (69 aa)).

In terms of assembly, component of the PNUTS-PP1 phosphatase complex.

Its subcellular location is the nucleus. The protein resides in the chromosome. Its function is as follows. Transcription factor that modulates cell fate reprogramming from the somatic state to the pluripotent and neuronal fate. Also acts as a regulatory component of protein phosphatase 1 (PP1) complexes. Component of the PNUTS-PP1 protein phosphatase complex, a PP1 complex that regulates RNA polymerase II transcription pause-release. PNUTS-PP1 also plays a role in the control of chromatin structure and cell cycle progression during the transition from mitosis into interphase. The protein is TOX high mobility group box family member 4 (tox4) of Xenopus tropicalis (Western clawed frog).